The following is a 454-amino-acid chain: Protein disulfide-isomerase TMX3 (454 aa).

A signal peptide spans 1 to 24 (MAAWKSWTALRLCATVVVLDMVVC). The 104-residue stretch at 25–128 (KGFVEDLDES…KDDIIEFAHR (104 aa)) folds into the Thioredoxin domain. The Lumenal segment spans residues 25–375 (KGFVEDLDES…TIVSIFKSSP (351 aa)). Active-site nucleophile residues include cysteine 53 and cysteine 56. A disulfide bond links cysteine 53 and cysteine 56. Asparagine 258 and asparagine 313 each carry an N-linked (GlcNAc...) asparagine glycan. Residues 376–396 (LMGCFLFGLPLGVISIMCYGI) form a helical membrane-spanning segment. The Cytoplasmic portion of the chain corresponds to 397 to 454 (YTADTDGGYIEERYEVSKSENENQEQIEESKEQQEPSSGGSVVPTVQEPKDVLEKKKD). The interval 412-454 (VSKSENENQEQIEESKEQQEPSSGGSVVPTVQEPKDVLEKKKD) is disordered. The segment covering 444–454 (EPKDVLEKKKD) has biased composition (basic and acidic residues). The Di-lysine motif motif lies at 451–454 (KKKD).

The protein belongs to the protein disulfide isomerase family. Post-translationally, N-glycosylated. Widely expressed. Expressed in brain, testis, lung, skin, kidney, uterus, bone, stomach, liver, prostate, placenta, eye and muscle.

It is found in the endoplasmic reticulum membrane. It catalyses the reaction Catalyzes the rearrangement of -S-S- bonds in proteins.. Probable disulfide isomerase, which participates in the folding of proteins containing disulfide bonds. May act as a dithiol oxidase. Acts as a regulator of endoplasmic reticulum-mitochondria contact sites via its ability to regulate redox signals. The chain is Protein disulfide-isomerase TMX3 (TMX3) from Homo sapiens (Human).